The sequence spans 1335 residues: Membrane-associated phosphatidylinositol transfer protein 2 (1335 aa).

2 disordered regions span residues 32–51 (ETHG…YTDG) and 262–341 (EEGP…SEEE). Over residues 275–286 (KDQASGTTSDPG) the composition is skewed to polar residues. The segment covering 299–319 (KQWSTSSKSSRSSKRGASPSR) has biased composition (low complexity). Phosphoserine occurs at positions 334, 338, 365, and 586. A disordered region spans residues 606–657 (HCSGGSGGGGSGGSSLESSRHLSRSNIDIPRSNGTEDSRRQLPRKRSDSSTY). The span at 609–618 (GGSGGGGSGG) shows a compositional bias: gly residues. The residue at position 630 (serine 630) is a Phosphoserine. Residues 639 to 653 (GTEDSRRQLPRKRSD) are compositionally biased toward basic and acidic residues. Serine 686, serine 687, and serine 688 each carry phosphoserine. One can recognise a DDHD domain in the interval 701–949 (FDFEIADLFL…VSFLLRQVMR (249 aa)). An Omega-N-methylarginine modification is found at arginine 814. The tract at residues 861-880 (ALPPPSPTTQGPRARARQVS) is disordered. Serine 1263 carries the phosphoserine modification. A disordered region spans residues 1282-1313 (TISAQPSGPSHRHDRTQTQMDSEQRGQRSMSV). The segment covering 1298-1313 (QTQMDSEQRGQRSMSV) has biased composition (polar residues).

Belongs to the PtdIns transfer protein family. PI transfer class IIA subfamily. In terms of assembly, interacts with CPNE4 (via VWFA domain). Interacts with PTK2B via its C-terminus. Detected in retina and in the dentate gyrus of the cerebellum.

It is found in the endomembrane system. The protein resides in the cytoplasm. It localises to the cytoskeleton. Catalyzes the transfer of phosphatidylinositol and phosphatidylcholine between membranes (in vitro). Binds calcium ions. The chain is Membrane-associated phosphatidylinositol transfer protein 2 (Pitpnm2) from Mus musculus (Mouse).